Reading from the N-terminus, the 233-residue chain is Pilin-like protein PilA3 (233 aa).

Residues methionine 1–glycine 4 constitute a propeptide, leader sequence. At phenylalanine 5 the chain carries N-methylphenylalanine. The chain crosses the membrane as a helical span at residues phenylalanine 5–valine 25. Residues leucine 121–serine 143 form a disordered region. A compositionally biased stretch (polar residues) spans valine 126–threonine 137.

It is found in the cell inner membrane. It localises to the cell outer membrane. The protein localises to the periplasm. Functionally, plays an essential role in natural DNA transformation but is not required for pilus biogenesis. The chain is Pilin-like protein PilA3 (pilA3) from Thermus thermophilus (strain ATCC BAA-163 / DSM 7039 / HB27).